The chain runs to 212 residues: Cytidylate kinase (212 aa).

9-17 (GPAAAGKGT) serves as a coordination point for ATP.

It belongs to the cytidylate kinase family. Type 1 subfamily.

The protein localises to the cytoplasm. The enzyme catalyses CMP + ATP = CDP + ADP. It carries out the reaction dCMP + ATP = dCDP + ADP. The protein is Cytidylate kinase of Sinorhizobium medicae (strain WSM419) (Ensifer medicae).